A 526-amino-acid chain; its full sequence is 2-succinyl-5-enolpyruvyl-6-hydroxy-3-cyclohexene-1-carboxylate synthase (526 aa).

The protein belongs to the TPP enzyme family. MenD subfamily. As to quaternary structure, homodimer. Mg(2+) serves as cofactor. Mn(2+) is required as a cofactor. Requires thiamine diphosphate as cofactor.

The catalysed reaction is isochorismate + 2-oxoglutarate + H(+) = 5-enolpyruvoyl-6-hydroxy-2-succinyl-cyclohex-3-ene-1-carboxylate + CO2. Its pathway is quinol/quinone metabolism; 1,4-dihydroxy-2-naphthoate biosynthesis; 1,4-dihydroxy-2-naphthoate from chorismate: step 2/7. It functions in the pathway quinol/quinone metabolism; menaquinone biosynthesis. In terms of biological role, catalyzes the thiamine diphosphate-dependent decarboxylation of 2-oxoglutarate and the subsequent addition of the resulting succinic semialdehyde-thiamine pyrophosphate anion to isochorismate to yield 2-succinyl-5-enolpyruvyl-6-hydroxy-3-cyclohexene-1-carboxylate (SEPHCHC). This chain is 2-succinyl-5-enolpyruvyl-6-hydroxy-3-cyclohexene-1-carboxylate synthase, found in Bdellovibrio bacteriovorus (strain ATCC 15356 / DSM 50701 / NCIMB 9529 / HD100).